The sequence spans 673 residues: Protein kinase ORF74 (673 aa).

The Protein kinase domain maps to 128–404; the sequence is TDTDEAVARG…ARELLVYPRY (277 aa). Catalysis depends on aspartate 252, which acts as the Proton acceptor. Positions 340-364 are disordered; sequence MDNDALDSRRTGRDGDPVNPEGFGT. A compositionally biased stretch (basic and acidic residues) spans 345 to 355; that stretch reads LDSRRTGRDGD.

This sequence belongs to the protein kinase superfamily. Ser/Thr protein kinase family.

The catalysed reaction is L-seryl-[protein] + ATP = O-phospho-L-seryl-[protein] + ADP + H(+). The enzyme catalyses L-threonyl-[protein] + ATP = O-phospho-L-threonyl-[protein] + ADP + H(+). This is Protein kinase ORF74 (ORF74) from Ictalurid herpesvirus 1 (strain Auburn) (IcHV-1).